We begin with the raw amino-acid sequence, 152 residues long: Transcriptional repressor NrdR (152 aa).

A zinc finger spans residues Cys-3–Cys-34. The ATP-cone domain occupies Leu-46–Asp-136.

Belongs to the NrdR family. Zn(2+) serves as cofactor.

In terms of biological role, negatively regulates transcription of bacterial ribonucleotide reductase nrd genes and operons by binding to NrdR-boxes. The polypeptide is Transcriptional repressor NrdR (Corynebacterium aurimucosum (strain ATCC 700975 / DSM 44827 / CIP 107346 / CN-1) (Corynebacterium nigricans)).